The following is a 1332-amino-acid chain: Abscisic-aldehyde oxidase (1332 aa).

Residues methionine 1–leucine 88 enclose the 2Fe-2S ferredoxin-type domain. Positions 40, 45, and 48 each coordinate [2Fe-2S] cluster. One can recognise an FAD-binding PCMH-type domain in the interval serine 219–alanine 400.

This sequence belongs to the xanthine dehydrogenase family. Aldehyde oxidases (AO) are homodimers and heterodimers of AO subunits. AO-delta is a AAO3 homodimer. AAO3 also forms a dimer with AAO2. Interacts with PUB44, and this interaction probably results in targeting of this protein to the proteasome. Requires [2Fe-2S] cluster as cofactor. FAD is required as a cofactor. Mo-molybdopterin serves as cofactor. In terms of tissue distribution, expressed in vascular tissues of all organs, particularly in phloem companion cells and xylem parenchymatic cells. Highly expressed in roots and rosettes, and to lower extent in seedlings, stems and flowers. Expressed at very low levels in siliques and dry seeds. Also detected in root dividing cells (tips and primordia), in mesophyll cells and inside the guard cells.

It localises to the cytoplasm. The catalysed reaction is 2-cis-(+)-abscisic aldehyde + O2 + H2O = 2-cis-(+)-abscisate + H2O2 + H(+). The enzyme catalyses 1-naphthaldehyde + O2 + H2O = 1-naphthoate + H2O2 + H(+). It catalyses the reaction indole-3-acetaldehyde + O2 + H2O = (indol-3-yl)acetate + H2O2 + H(+). In terms of biological role, in higher plants aldehyde oxidases (AO) appear to be homo- and heterodimeric assemblies of AO subunits with probably different physiological functions. AO-delta may be involved in the last step of abscisic acid biosynthesis, at least in leaves and seeds. In vitro, AO-delta oxidizes abscisic aldehyde to abscisic acid (ABA). In vitro, AO-delta also uses 1-naphthaldehyde, indole-3-aldehyde (IAld), benzaldehyde and cinnamaldehyde as substrate; the AAO2-AAO3 dimer also uses abscisic aldehyde as substrate. The chain is Abscisic-aldehyde oxidase (AAO3) from Arabidopsis thaliana (Mouse-ear cress).